The chain runs to 238 residues: Large ribosomal subunit protein bL25 (238 aa).

Residues 1 to 10 (MATTVKELKA) show a composition bias toward basic and acidic residues. Positions 1–24 (MATTVKELKATARPKSGKGAARAE) are disordered.

This sequence belongs to the bacterial ribosomal protein bL25 family. CTC subfamily. As to quaternary structure, part of the 50S ribosomal subunit; part of the 5S rRNA/L5/L18/L25 subcomplex. Contacts the 5S rRNA. Binds to the 5S rRNA independently of L5 and L18.

This is one of the proteins that binds to the 5S RNA in the ribosome where it forms part of the central protuberance. The polypeptide is Large ribosomal subunit protein bL25 (Bradyrhizobium diazoefficiens (strain JCM 10833 / BCRC 13528 / IAM 13628 / NBRC 14792 / USDA 110)).